A 168-amino-acid chain; its full sequence is uncharacterized protein (168 aa).

Residues 1–21 (MKLLKALAVLSLATISSHSFA) constitute a signal peptide (or 19).

This is an uncharacterized protein from Haemophilus influenzae (strain ATCC 51907 / DSM 11121 / KW20 / Rd).